A 160-amino-acid chain; its full sequence is Large ribosomal subunit protein eL29 (160 aa).

Residues 1–26 are compositionally biased toward basic residues; that stretch reads MAKSKNHTTHNQSRKWHRNGIKKPRS. The segment at 1–32 is disordered; it reads MAKSKNHTTHNQSRKWHRNGIKKPRSQRYESL. An N6-methyllysine modification is found at lysine 5. Serine 31 is subject to Phosphoserine. An N6-acetyllysine modification is found at lysine 33. Residues 119–160 are disordered; it reads CRPKSQAKAQSKAKATAGGTAAAPVPPASAPKGAQAPTKAPQ. The segment covering 121-141 has biased composition (low complexity); sequence PKSQAKAQSKAKATAGGTAAA.

The protein belongs to the eukaryotic ribosomal protein eL29 family. In terms of assembly, component of the large ribosomal subunit.

Its subcellular location is the cytoplasm. Functionally, component of the large ribosomal subunit. The ribosome is a large ribonucleoprotein complex responsible for the synthesis of proteins in the cell. This is Large ribosomal subunit protein eL29 (RPL29) from Sus scrofa (Pig).